The following is a 354-amino-acid chain: DNA integrity scanning protein DisA (354 aa).

One can recognise a DAC domain in the interval Gly-6–Ser-144. ATP-binding positions include Gly-73, Leu-91, and Thr-104–Thr-108.

The protein belongs to the DisA family. As to quaternary structure, homooctamer. It depends on Mg(2+) as a cofactor.

The enzyme catalyses 2 ATP = 3',3'-c-di-AMP + 2 diphosphate. Functionally, participates in a DNA-damage check-point that is active prior to asymmetric division when DNA is damaged. DisA forms globular foci that rapidly scan along the chromosomes during sporulation, searching for lesions. When a lesion is present, DisA pauses at the lesion site. This triggers a cellular response that culminates in a temporary block in sporulation initiation. Its function is as follows. Also has diadenylate cyclase activity, catalyzing the condensation of 2 ATP molecules into cyclic di-AMP (c-di-AMP). c-di-AMP acts as a signaling molecule that couples DNA integrity with progression of sporulation. The rise in c-di-AMP level generated by DisA while scanning the chromosome, operates as a positive signal that advances sporulation; upon encountering a lesion, the DisA focus arrests at the damaged site and halts c-di-AMP synthesis. This is DNA integrity scanning protein DisA from Clostridium botulinum (strain Eklund 17B / Type B).